A 164-amino-acid chain; its full sequence is Probable ubiquitin-conjugating enzyme E2 7 (164 aa).

Positions 3–163 constitute a UBC core domain; that stretch reads QSSLLLKKQL…VAQCVRRSQE (161 aa). C88 serves as the catalytic Glycyl thioester intermediate.

It belongs to the ubiquitin-conjugating enzyme family.

It carries out the reaction S-ubiquitinyl-[E1 ubiquitin-activating enzyme]-L-cysteine + [E2 ubiquitin-conjugating enzyme]-L-cysteine = [E1 ubiquitin-activating enzyme]-L-cysteine + S-ubiquitinyl-[E2 ubiquitin-conjugating enzyme]-L-cysteine.. Its pathway is protein modification; protein ubiquitination. Catalyzes the covalent attachment of ubiquitin to other proteins. In Caenorhabditis elegans, this protein is Probable ubiquitin-conjugating enzyme E2 7 (ubc-7).